The chain runs to 580 residues: YTH domain-containing family protein 2 (580 aa).

Residues M1 to N45 are disordered. S2 is subject to N-acetylserine. Residues S2, S4, S5, S22, S39, and S196 each carry the phosphoserine modification. The tract at residues S2–E385 is localization to mRNA processing bodies (P-bodies). A disordered region spans residues A247–P388. The span at A291 to P317 shows a compositional bias: polar residues. Low complexity predominate over residues A338–T350. S360 bears the Phosphoserine mark. The segment covering S360 to V372 has biased composition (gly residues). Residues G373 to S384 show a composition bias toward polar residues. The segment at P386 to K580 is interaction with m6A-containing mRNAs. S395 carries the phosphoserine modification. A YTH domain is found at G411 to I545. Residues K417 to Y419, D423, W433 to C434, N463, W487, and W492 contribute to the RNA site.

This sequence belongs to the YTHDF family. YTHDF2 subfamily. Interacts with CNOT1; interaction is direct and promotes recruitment of the CCR4-NOT complex. Interacts with YTHDF3. Interacts with RIDA/HRSP12; interaction leads to recruitment of the ribonuclease P/MRP complex. Post-translationally, ubiquitinated by the SCF(SKP2) complex, leading to its degradation.

It localises to the cytoplasm. Its subcellular location is the cytosol. The protein resides in the P-body. The protein localises to the stress granule. It is found in the nucleus. Its function is as follows. Specifically recognizes and binds N6-methyladenosine (m6A)-containing RNAs, and regulates their stability. M6A is a modification present at internal sites of mRNAs and some non-coding RNAs and plays a role in mRNA stability and processing. Acts as a regulator of mRNA stability by promoting degradation of m6A-containing mRNAs via interaction with the CCR4-NOT and ribonuclease P/MRP complexes, depending on the context. The YTHDF paralogs (YTHDF1, YTHDF2 and YTHDF3) share m6A-containing mRNAs targets and act redundantly to mediate mRNA degradation and cellular differentiation. M6A-containing mRNAs containing a binding site for RIDA/HRSP12 (5'-GGUUC-3') are preferentially degraded by endoribonucleolytic cleavage: cooperative binding of RIDA/HRSP12 and YTHDF2 to transcripts leads to recruitment of the ribonuclease P/MRP complex. Other m6A-containing mRNAs undergo deadenylation via direct interaction between YTHDF2 and CNOT1, leading to recruitment of the CCR4-NOT and subsequent deadenylation of m6A-containing mRNAs. Required maternally to regulate oocyte maturation: probably acts by binding to m6A-containing mRNAs, thereby regulating maternal transcript dosage during oocyte maturation, which is essential for the competence of oocytes to sustain early zygotic development. Also required during spermatogenesis: regulates spermagonial adhesion by promoting degradation of m6A-containing transcripts coding for matrix metallopeptidases. Also involved in hematopoietic stem cells specification by binding to m6A-containing mRNAs, leading to promote their degradation. Also acts as a regulator of neural development by promoting m6A-dependent degradation of neural development-related mRNA targets. Inhibits neural specification of induced pluripotent stem cells by binding to methylated neural-specific mRNAs and promoting their degradation, thereby restraining neural differentiation. Regulates circadian regulation of hepatic lipid metabolism: acts by promoting m6A-dependent degradation of PPARA transcripts. Regulates the innate immune response to infection by inhibiting the type I interferon response: acts by binding to m6A-containing IFNB transcripts and promoting their degradation. May also act as a promoter of cap-independent mRNA translation following heat shock stress: upon stress, relocalizes to the nucleus and specifically binds mRNAs with some m6A methylation mark at their 5'-UTR, protecting demethylation of mRNAs by FTO, thereby promoting cap-independent mRNA translation. Regulates mitotic entry by promoting the phase-specific m6A-dependent degradation of WEE1 transcripts. Promotes formation of phase-separated membraneless compartments, such as P-bodies or stress granules, by undergoing liquid-liquid phase separation upon binding to mRNAs containing multiple m6A-modified residues: polymethylated mRNAs act as a multivalent scaffold for the binding of YTHDF proteins, juxtaposing their disordered regions and thereby leading to phase separation. The resulting mRNA-YTHDF complexes then partition into different endogenous phase-separated membraneless compartments, such as P-bodies, stress granules or neuronal RNA granules. May also recognize and bind RNAs modified by C5-methylcytosine (m5C) and act as a regulator of rRNA processing. The sequence is that of YTH domain-containing family protein 2 from Bos taurus (Bovine).